A 1024-amino-acid chain; its full sequence is Beta-galactosidase (1024 aa).

Substrate is bound by residues asparagine 103 and aspartate 202. Aspartate 202 serves as a coordination point for Na(+). Mg(2+) is bound by residues glutamate 417, histidine 419, and glutamate 462. Substrate is bound by residues glutamate 462 and 538–541 (EYAH). Glutamate 462 acts as the Proton donor in catalysis. The active-site Nucleophile is the glutamate 538. Residue asparagine 598 participates in Mg(2+) binding. The Na(+) site is built by phenylalanine 602 and asparagine 605. 2 residues coordinate substrate: asparagine 605 and tryptophan 1000.

Belongs to the glycosyl hydrolase 2 family. In terms of assembly, homotetramer. Mg(2+) is required as a cofactor. Na(+) serves as cofactor.

It catalyses the reaction Hydrolysis of terminal non-reducing beta-D-galactose residues in beta-D-galactosides.. The polypeptide is Beta-galactosidase (Shigella sonnei (strain Ss046)).